A 124-amino-acid polypeptide reads, in one-letter code: Small ribosomal subunit protein bS6 (124 aa).

Residues 96 to 124 (ETGPSPMMKEVQREEAKKAAAAQPAEAQA) form a disordered region. Low complexity predominate over residues 114–124 (AAAAQPAEAQA).

This sequence belongs to the bacterial ribosomal protein bS6 family.

Its function is as follows. Binds together with bS18 to 16S ribosomal RNA. This is Small ribosomal subunit protein bS6 from Burkholderia orbicola (strain AU 1054).